The sequence spans 124 residues: GISTFFLSVTLFTVNRTCDLLTPPPWYPITVKNTHHTSRHRSIFFILSVMIGKGTREDVQLSLSSLFQGVVMIVGQNPQAPSDLGIEGGERAQGQNAHSVHGPGLQTERGGSQLQMVGHPLREL.

The segment at 82 to 124 (SDLGIEGGERAQGQNAHSVHGPGLQTERGGSQLQMVGHPLREL) is disordered.

This is an uncharacterized protein from Human cytomegalovirus (strain AD169) (HHV-5).